A 70-amino-acid chain; its full sequence is DNA-directed RNA polymerase subunit epsilon (70 aa).

Belongs to the RNA polymerase subunit epsilon family. In terms of assembly, RNAP is composed of a core of 2 alpha, a beta and a beta' subunit. The core is associated with a delta subunit, and at least one of epsilon or omega. When a sigma factor is associated with the core the holoenzyme is formed, which can initiate transcription.

The enzyme catalyses RNA(n) + a ribonucleoside 5'-triphosphate = RNA(n+1) + diphosphate. Functionally, a non-essential component of RNA polymerase (RNAP). This is DNA-directed RNA polymerase subunit epsilon from Limosilactobacillus reuteri (strain DSM 20016) (Lactobacillus reuteri).